The chain runs to 191 residues: Protein Ves (191 aa).

Belongs to the Ves family.

This chain is Protein Ves, found in Escherichia coli O127:H6 (strain E2348/69 / EPEC).